A 64-amino-acid chain; its full sequence is Large ribosomal subunit protein bL35 (64 aa).

It belongs to the bacterial ribosomal protein bL35 family.

In Desulforamulus reducens (strain ATCC BAA-1160 / DSM 100696 / MI-1) (Desulfotomaculum reducens), this protein is Large ribosomal subunit protein bL35.